Reading from the N-terminus, the 266-residue chain is Glutamate racemase (266 aa).

Substrate is bound by residues 9-10 (DS) and 41-42 (YG). Cys72 functions as the Proton donor/acceptor in the catalytic mechanism. 73–74 (NT) is a substrate binding site. The Proton donor/acceptor role is filled by Cys183. Position 184 to 185 (184 to 185 (TH)) interacts with substrate.

Belongs to the aspartate/glutamate racemases family.

The enzyme catalyses L-glutamate = D-glutamate. It participates in cell wall biogenesis; peptidoglycan biosynthesis. Provides the (R)-glutamate required for cell wall biosynthesis. The protein is Glutamate racemase of Listeria monocytogenes serotype 4b (strain CLIP80459).